A 169-amino-acid polypeptide reads, in one-letter code: Cytochrome c oxidase subunit 4 isoform 1, mitochondrial (169 aa).

The N-terminal 22 residues, 1–22 (MLATRALSLIGKRAISTSVCLR), are a transit peptide targeting the mitochondrion. Over 23–98 (AHGSVVKSED…SFAEMNKGTN (76 aa)) the chain is Mitochondrial matrix. Position 29 is an N6-acetyllysine; alternate (Lys29). N6-succinyllysine; alternate is present on Lys29. N6-acetyllysine is present on Lys53. Ser56 and Ser58 each carry phosphoserine. Lys60 is subject to N6-acetyllysine; alternate. Lys60 carries the N6-succinyllysine; alternate modification. Lys67 carries the N6-acetyllysine modification. A helical transmembrane segment spans residues 99–124 (EWKTVVGLAMFFIGFTALVLIWEKSY). Topologically, residues 125 to 169 (VYGPIPHTFDRDWVAMQTKRMLDMKVNPIQGFSAKWDYNKNEWKK) are mitochondrial intermembrane.

This sequence belongs to the cytochrome c oxidase IV family. As to quaternary structure, component of the cytochrome c oxidase (complex IV, CIV), a multisubunit enzyme composed of 14 subunits. The complex is composed of a catalytic core of 3 subunits MT-CO1, MT-CO2 and MT-CO3, encoded in the mitochondrial DNA, and 11 supernumerary subunits COX4I, COX5A, COX5B, COX6A, COX6B, COX6C, COX7A, COX7B, COX7C, COX8 and NDUFA4, which are encoded in the nuclear genome. The complex exists as a monomer or a dimer and forms supercomplexes (SCs) in the inner mitochondrial membrane with NADH-ubiquinone oxidoreductase (complex I, CI) and ubiquinol-cytochrome c oxidoreductase (cytochrome b-c1 complex, complex III, CIII), resulting in different assemblies (supercomplex SCI(1)III(2)IV(1) and megacomplex MCI(2)III(2)IV(2)). Interacts with PHB2; the interaction decreases in absence of SPHK2. Interacts with AFG1L. Interacts with ABCB7; this interaction allows the regulation of cellular iron homeostasis and cellular reactive oxygen species (ROS) levels in cardiomyocytes. Interacts with FLVCR2; this interaction occurs in the absence of heme and is disrupted upon heme binding. Interacts with IRGC.

It is found in the mitochondrion inner membrane. It functions in the pathway energy metabolism; oxidative phosphorylation. Its function is as follows. Component of the cytochrome c oxidase, the last enzyme in the mitochondrial electron transport chain which drives oxidative phosphorylation. The respiratory chain contains 3 multisubunit complexes succinate dehydrogenase (complex II, CII), ubiquinol-cytochrome c oxidoreductase (cytochrome b-c1 complex, complex III, CIII) and cytochrome c oxidase (complex IV, CIV), that cooperate to transfer electrons derived from NADH and succinate to molecular oxygen, creating an electrochemical gradient over the inner membrane that drives transmembrane transport and the ATP synthase. Cytochrome c oxidase is the component of the respiratory chain that catalyzes the reduction of oxygen to water. Electrons originating from reduced cytochrome c in the intermembrane space (IMS) are transferred via the dinuclear copper A center (CU(A)) of subunit 2 and heme A of subunit 1 to the active site in subunit 1, a binuclear center (BNC) formed by heme A3 and copper B (CU(B)). The BNC reduces molecular oxygen to 2 water molecules using 4 electrons from cytochrome c in the IMS and 4 protons from the mitochondrial matrix. This Rattus norvegicus (Rat) protein is Cytochrome c oxidase subunit 4 isoform 1, mitochondrial (Cox4i1).